The following is a 110-amino-acid chain: Insulin (110 aa).

Positions 1-24 (MASLAALLPLLALLVLCRLDPAQA) are cleaved as a signal peptide. 3 cysteine pairs are disulfide-bonded: C31–C96, C43–C109, and C95–C100. The propeptide at 57–87 (EVEELQVGQAELGGGPGAGGLQPSALELALQ) is c peptide.

This sequence belongs to the insulin family. In terms of assembly, heterodimer of a B chain and an A chain linked by two disulfide bonds.

The protein localises to the secreted. Its function is as follows. Insulin decreases blood glucose concentration. It increases cell permeability to monosaccharides, amino acids and fatty acids. It accelerates glycolysis, the pentose phosphate cycle, and glycogen synthesis in liver. This chain is Insulin (INS), found in Oryctolagus cuniculus (Rabbit).